The primary structure comprises 108 residues: Peptidyl-prolyl cis-trans isomerase FKBP1B (108 aa).

The region spanning 20–108 (GQICVVHYTG…IFDVELLNLE (89 aa)) is the PPIase FKBP-type domain.

Belongs to the FKBP-type PPIase family. FKBP1 subfamily. In terms of assembly, identified in a complex composed of RYR2, FKBP1B, PKA catalytic subunit, PRKAR2A, AKAP6, and the protein phosphatases PP2A and PP1. Interacts directly with RYR2. Detected in heart muscle (at protein level). Ubiquitous.

The protein resides in the cytoplasm. Its subcellular location is the sarcoplasmic reticulum. It catalyses the reaction [protein]-peptidylproline (omega=180) = [protein]-peptidylproline (omega=0). With respect to regulation, inhibited by both FK506 and rapamycin. Its function is as follows. Has the potential to contribute to the immunosuppressive and toxic effects of FK506 and rapamycin. PPIases accelerate the folding of proteins. It catalyzes the cis-trans isomerization of proline imidic peptide bonds in oligopeptides. The polypeptide is Peptidyl-prolyl cis-trans isomerase FKBP1B (Fkbp1b) (Rattus norvegicus (Rat)).